The sequence spans 309 residues: tRNA pseudouridine synthase B (309 aa).

The active-site Nucleophile is aspartate 52.

Belongs to the pseudouridine synthase TruB family. Type 1 subfamily.

The enzyme catalyses uridine(55) in tRNA = pseudouridine(55) in tRNA. Its function is as follows. Responsible for synthesis of pseudouridine from uracil-55 in the psi GC loop of transfer RNAs. This is tRNA pseudouridine synthase B from Leptospira interrogans serogroup Icterohaemorrhagiae serovar Lai (strain 56601).